We begin with the raw amino-acid sequence, 274 residues long: MAIVKCKPTSPGRRHVVKVVNADLHKGKPYAPLLEKNSKNGGRNNNGRITVRHIGGGHKHHYRVIDFKRTKDGIPATVERLEYDPNRSANIALVLYKDGERRYILAPKGVVAGDVIQSGVDAPIKAGNTLPMRNIPVGSTVHNVELKPGKGGQLARSAGAYAQIVARDGAYVTIRLRSGEMRKVLSEGRATIGEVGNSEHMLRELGKAGASRWRGVRPTVRGVVMNPVDHPHGGGEGRTSGGRHPVSPWGMPTKGFKTRKNKRTDKYIVRRRNK.

Positions 223 to 265 (VVMNPVDHPHGGGEGRTSGGRHPVSPWGMPTKGFKTRKNKRTD) are disordered. Positions 256-265 (FKTRKNKRTD) are enriched in basic residues.

This sequence belongs to the universal ribosomal protein uL2 family. As to quaternary structure, part of the 50S ribosomal subunit. Forms a bridge to the 30S subunit in the 70S ribosome.

One of the primary rRNA binding proteins. Required for association of the 30S and 50S subunits to form the 70S ribosome, for tRNA binding and peptide bond formation. It has been suggested to have peptidyltransferase activity; this is somewhat controversial. Makes several contacts with the 16S rRNA in the 70S ribosome. This chain is Large ribosomal subunit protein uL2, found in Vibrio parahaemolyticus serotype O3:K6 (strain RIMD 2210633).